The chain runs to 531 residues: Histone-arginine methyltransferase CARMER (531 aa).

The region spanning alanine 141–histidine 450 is the SAM-dependent MTase PRMT-type domain. Positions 154, 163, 187, 209, 238, and 266 each coordinate S-adenosyl-L-methionine. Arginine 501 bears the Asymmetric dimethylarginine; by autocatalysis mark.

The protein belongs to the class I-like SAM-binding methyltransferase superfamily. Protein arginine N-methyltransferase family. Homodimer. Post-translationally, the dimethylated protein is the major form.

The protein resides in the cytoplasm. Its subcellular location is the nucleus. It catalyses the reaction L-arginyl-[protein] + 2 S-adenosyl-L-methionine = N(omega),N(omega)-dimethyl-L-arginyl-[protein] + 2 S-adenosyl-L-homocysteine + 2 H(+). In terms of biological role, methylates (mono- and asymmetric dimethylation) the guanidino nitrogens of arginyl residues in proteins. May methylate histone H3 at 'Arg-17' and activate transcription via chromatin remodeling. This Drosophila ananassae (Fruit fly) protein is Histone-arginine methyltransferase CARMER (Art4).